We begin with the raw amino-acid sequence, 272 residues long: Putative phosphoenolpyruvate synthase regulatory protein (272 aa).

ADP is bound at residue 152–159; the sequence is GVSRCGKT.

This sequence belongs to the pyruvate, phosphate/water dikinase regulatory protein family. PSRP subfamily.

The enzyme catalyses [pyruvate, water dikinase] + ADP = [pyruvate, water dikinase]-phosphate + AMP + H(+). It carries out the reaction [pyruvate, water dikinase]-phosphate + phosphate + H(+) = [pyruvate, water dikinase] + diphosphate. Functionally, bifunctional serine/threonine kinase and phosphorylase involved in the regulation of the phosphoenolpyruvate synthase (PEPS) by catalyzing its phosphorylation/dephosphorylation. The chain is Putative phosphoenolpyruvate synthase regulatory protein from Stutzerimonas stutzeri (strain A1501) (Pseudomonas stutzeri).